Reading from the N-terminus, the 105-residue chain is Large ribosomal subunit protein uL24 (105 aa).

It belongs to the universal ribosomal protein uL24 family. In terms of assembly, part of the 50S ribosomal subunit.

One of two assembly initiator proteins, it binds directly to the 5'-end of the 23S rRNA, where it nucleates assembly of the 50S subunit. Functionally, one of the proteins that surrounds the polypeptide exit tunnel on the outside of the subunit. The polypeptide is Large ribosomal subunit protein uL24 (Staphylococcus epidermidis (strain ATCC 35984 / DSM 28319 / BCRC 17069 / CCUG 31568 / BM 3577 / RP62A)).